Reading from the N-terminus, the 262-residue chain is MAPALLLIPAALASFILAFGTGVEFVRFTSLRPLLGGIPESGGPDARQGWLAALQDRSILAPLAWDLGLLLLFVGQHSLMAAERVKAWTSRYFGVLQRSLYVACTALALQLVMRYWEPIPKGPVLWEARAEPWATWVPLLCFVLHVISWLLIFSILLVFDYAELMGLKQVYYHVLGLGEPLALKSPRALRLFSHLRHPVCVELLTVLWVVPTLGTDRLLLAFLLTLYLGLAHGLDQQDLRYLRAQLQRKLHLLSRPQDGEAE.

The Nuclear segment spans residues 1–4 (MAPA). Residues 5-28 (LLLIPAALASFILAFGTGVEFVRF) traverse the membrane as a helical segment. The Perinuclear space segment spans residues 29-58 (TSLRPLLGGIPESGGPDARQGWLAALQDRS). The helical transmembrane segment at 59–80 (ILAPLAWDLGLLLLFVGQHSLM) threads the bilayer. Over 81-97 (AAERVKAWTSRYFGVLQ) the chain is Nuclear. The helical transmembrane segment at 98–114 (RSLYVACTALALQLVMR) threads the bilayer. Over 115-133 (YWEPIPKGPVLWEARAEPW) the chain is Perinuclear space. A helical membrane pass occupies residues 134 to 164 (ATWVPLLCFVLHVISWLLIFSILLVFDYAEL). Over 165–191 (MGLKQVYYHVLGLGEPLALKSPRALRL) the chain is Nuclear. Residues 192-210 (FSHLRHPVCVELLTVLWVV) traverse the membrane as a helical segment. The Perinuclear space segment spans residues 211-216 (PTLGTD). The chain crosses the membrane as a helical span at residues 217–234 (RLLLAFLLTLYLGLAHGL). At 235–262 (DQQDLRYLRAQLQRKLHLLSRPQDGEAE) the chain is on the nuclear side.

The protein belongs to the nurim family.

The protein resides in the nucleus inner membrane. This Homo sapiens (Human) protein is Nurim (NRM).